Here is a 336-residue protein sequence, read N- to C-terminus: Holliday junction branch migration complex subunit RuvB (336 aa).

Residues 1–182 (MKERIVNLET…FGMSFRMQFY (182 aa)) are large ATPase domain (RuvB-L). Residues L21, R22, G63, K66, T67, S68, 129-131 (EDF), R172, Y182, and R219 contribute to the ATP site. Residue T67 participates in Mg(2+) binding. A small ATPAse domain (RuvB-S) region spans residues 183-253 (SPSELALIIK…ITLHALNELG (71 aa)). The head domain (RuvB-H) stretch occupies residues 256–336 (ELGFDEADLA…IPTLKSQTLF (81 aa)). Residues R310 and R315 each coordinate DNA.

Belongs to the RuvB family. In terms of assembly, homohexamer. Forms an RuvA(8)-RuvB(12)-Holliday junction (HJ) complex. HJ DNA is sandwiched between 2 RuvA tetramers; dsDNA enters through RuvA and exits via RuvB. An RuvB hexamer assembles on each DNA strand where it exits the tetramer. Each RuvB hexamer is contacted by two RuvA subunits (via domain III) on 2 adjacent RuvB subunits; this complex drives branch migration. In the full resolvosome a probable DNA-RuvA(4)-RuvB(12)-RuvC(2) complex forms which resolves the HJ.

It localises to the cytoplasm. It catalyses the reaction ATP + H2O = ADP + phosphate + H(+). In terms of biological role, the RuvA-RuvB-RuvC complex processes Holliday junction (HJ) DNA during genetic recombination and DNA repair, while the RuvA-RuvB complex plays an important role in the rescue of blocked DNA replication forks via replication fork reversal (RFR). RuvA specifically binds to HJ cruciform DNA, conferring on it an open structure. The RuvB hexamer acts as an ATP-dependent pump, pulling dsDNA into and through the RuvAB complex. RuvB forms 2 homohexamers on either side of HJ DNA bound by 1 or 2 RuvA tetramers; 4 subunits per hexamer contact DNA at a time. Coordinated motions by a converter formed by DNA-disengaged RuvB subunits stimulates ATP hydrolysis and nucleotide exchange. Immobilization of the converter enables RuvB to convert the ATP-contained energy into a lever motion, pulling 2 nucleotides of DNA out of the RuvA tetramer per ATP hydrolyzed, thus driving DNA branch migration. The RuvB motors rotate together with the DNA substrate, which together with the progressing nucleotide cycle form the mechanistic basis for DNA recombination by continuous HJ branch migration. Branch migration allows RuvC to scan DNA until it finds its consensus sequence, where it cleaves and resolves cruciform DNA. The chain is Holliday junction branch migration complex subunit RuvB from Helicobacter pylori (strain G27).